Consider the following 263-residue polypeptide: Dihydropteroate synthase type-3 (263 aa).

Residues Ser-2–Lys-257 form the Pterin-binding domain. Asn-9 contributes to the Mg(2+) binding site. Residue Ser-49 participates in 4-aminobenzoate binding. The (7,8-dihydropterin-6-yl)methyl diphosphate site is built by Asp-82, Asn-101, and Asp-172. 6-hydroxymethyl-7,8-dihydropterin-binding residues include Asn-101 and Asp-172. Position 177 (Phe-177) interacts with 4-aminobenzoate. A (7,8-dihydropterin-6-yl)methyl diphosphate-binding site is contributed by Lys-211. Lys-211 is a binding site for 6-hydroxymethyl-7,8-dihydropterin. Residue Ser-212 participates in 4-aminobenzoate binding. Arg-245–His-247 is a binding site for (7,8-dihydropterin-6-yl)methyl diphosphate.

The protein belongs to the DHPS family. The cofactor is Mg(2+).

It catalyses the reaction (7,8-dihydropterin-6-yl)methyl diphosphate + 4-aminobenzoate = 7,8-dihydropteroate + diphosphate. It functions in the pathway cofactor biosynthesis; tetrahydrofolate biosynthesis; 7,8-dihydrofolate from 2-amino-4-hydroxy-6-hydroxymethyl-7,8-dihydropteridine diphosphate and 4-aminobenzoate: step 1/2. Functionally, catalyzes the condensation of para-aminobenzoate (pABA) with 6-hydroxymethyl-7,8-dihydropterin diphosphate (DHPt-PP) to form 7,8-dihydropteroate (H2Pte), the immediate precursor of folate derivatives. Confers resistance to sulfonamide antibiotics, including sulfamethoxazole (SMX), sulfadiazine and sulfisoxazole. This Escherichia coli protein is Dihydropteroate synthase type-3.